A 750-amino-acid chain; its full sequence is Neprilysin (750 aa).

The segment covering 1-14 has biased composition (polar residues); it reads MGKSESQMDITDIN. The tract at residues 1 to 20 is disordered; the sequence is MGKSESQMDITDINTPKPKK. Residue Gly-2 is the site of N-myristoyl glycine attachment. Residues 2 to 28 lie on the Cytoplasmic side of the membrane; it reads GKSESQMDITDINTPKPKKKQRWTPLE. Phosphoserine occurs at positions 4 and 6. The Stop-transfer sequence motif lies at 16 to 23; that stretch reads PKPKKKQR. Residues 29–51 traverse the membrane as a helical; Signal-anchor for type II membrane protein segment; that stretch reads ISLSVLVLLLTIIAVTMIALYAT. At 52–750 the chain is on the extracellular side; it reads YDDGICKSSD…MNPEKKCRVW (699 aa). The Peptidase M13 domain occupies 56 to 750; the sequence is ICKSSDCIKS…MNPEKKCRVW (695 aa). 6 disulfides stabilise this stretch: Cys-57-Cys-62, Cys-80-Cys-735, Cys-88-Cys-695, Cys-143-Cys-411, Cys-234-Cys-242, and Cys-621-Cys-747. Arg-103 serves as a coordination point for a peptide. Residue Asn-145 is glycosylated (N-linked (GlcNAc...) asparagine). 4 N-linked (GlcNAc...) asparagine glycosylation sites follow: Asn-285, Asn-311, Asn-325, and Asn-335. His-584 contacts Zn(2+). Glu-585 is a catalytic residue. Residue His-588 participates in Zn(2+) binding. Residue Asn-628 is glycosylated (N-linked (GlcNAc...) asparagine). Glu-647 is a binding site for Zn(2+). Asp-651 acts as the Proton donor in catalysis.

This sequence belongs to the peptidase M13 family. Zn(2+) serves as cofactor. In terms of processing, myristoylation is a determinant of membrane targeting. Post-translationally, glycosylation at Asn-628 is necessary both for surface expression and neutral endopeptidase activity.

The protein resides in the cell membrane. The enzyme catalyses Preferential cleavage of polypeptides between hydrophobic residues, particularly with Phe or Tyr at P1'.. It carries out the reaction substance P + H2O = substance P(1-9) + L-Leu-L-Met-NH2. It catalyses the reaction substance P + H2O = substance P(1-7) + L-Phe-Gly-L-Leu-L-Met-NH2. The catalysed reaction is neurotensin + H2O = neurotensin(1-11) + L-isoleucyl-L-leucine. The enzyme catalyses neurotensin + H2O = neurotensin(1-10) + L-tyrosyl-L-isoleucyl-L-leucine. In terms of biological role, thermolysin-like specificity, but is almost confined on acting on polypeptides of up to 30 amino acids. Biologically important in the destruction of opioid peptides such as Met- and Leu-enkephalins by cleavage of a Gly-Phe bond. Catalyzes cleavage of bradykinin, substance P and neurotensin peptides. Able to cleave angiotensin-1, angiotensin-2 and angiotensin 1-9. Involved in the degradation of atrial natriuretic factor (ANF) and brain natriuretic factor (BNP(1-32)). Displays UV-inducible elastase activity toward skin preelastic and elastic fibers. The sequence is that of Neprilysin (MME) from Pongo abelii (Sumatran orangutan).